Consider the following 192-residue polypeptide: MNAIWIAVAAVSLLGLAFGAILGYASRRFAVEDDPVVEKIDEILPQSQCGQCGYPGCRPYAEAISCNGEKINRCAPGGEAVMLKIAELLNVEPQPLDGEAQEITPARMVAVIDENNCIGCTKCIQACPVDAIVGATRAMHTVMSDLCTGCNLCVDPCPTHCISLQPVAETPDSWKWDLNTIPVRIIPVEHHA.

Residues 1 to 26 (MNAIWIAVAAVSLLGLAFGAILGYAS) form a hydrophobic region. Residues 32 to 91 (EDDPVVEKIDEILPQSQCGQCGYPGCRPYAEAISCNGEKINRCAPGGEAVMLKIAELLNV) form the 4Fe-4S domain. [4Fe-4S] cluster-binding residues include Cys49, Cys52, Cys57, Cys74, Cys117, Cys120, Cys123, Cys127, Cys147, Cys150, Cys153, and Cys157. 4Fe-4S ferredoxin-type domains follow at residues 108–137 (MVAV…GATR) and 138–167 (AMHT…LQPV).

Belongs to the 4Fe4S bacterial-type ferredoxin family. RnfB subfamily. As to quaternary structure, the complex is composed of six subunits: RsxA, RsxB, RsxC, RsxD, RsxE and RsxG. Requires [4Fe-4S] cluster as cofactor.

The protein resides in the cell inner membrane. Functionally, part of a membrane-bound complex that couples electron transfer with translocation of ions across the membrane. Required to maintain the reduced state of SoxR. The chain is Ion-translocating oxidoreductase complex subunit B from Escherichia coli O8 (strain IAI1).